The primary structure comprises 505 residues: Ribose import ATP-binding protein RbsA 2 (505 aa).

2 consecutive ABC transporter domains span residues 13 to 249 (LALE…VGRD) and 259 to 503 (VRAG…TGRA). 45–52 (GENGAGKS) provides a ligand contact to ATP.

The protein belongs to the ABC transporter superfamily. Ribose importer (TC 3.A.1.2.1) family. The complex is composed of an ATP-binding protein (RbsA), two transmembrane proteins (RbsC) and a solute-binding protein (RbsB).

The protein localises to the cell membrane. It carries out the reaction D-ribose(out) + ATP + H2O = D-ribose(in) + ADP + phosphate + H(+). Its function is as follows. Part of the ABC transporter complex RbsABC involved in ribose import. Responsible for energy coupling to the transport system. In Streptomyces avermitilis (strain ATCC 31267 / DSM 46492 / JCM 5070 / NBRC 14893 / NCIMB 12804 / NRRL 8165 / MA-4680), this protein is Ribose import ATP-binding protein RbsA 2.